We begin with the raw amino-acid sequence, 1382 residues long: Suppressor of organelle fusion 2 (1382 aa).

The BEACH domain maps to 229–463 (RIPLDEATSN…QLFNRPHPIR (235 aa)). 2 WD repeats span residues 1094-1133 (GHQEKIRKLAAISNENSFVSASSDKTVKLWSIKPELDEIG) and 1140-1176 (KHTRPVHDITILADNSIASTDGVLHVWDPFRTTLLAQ).

The protein belongs to the WD repeat WDR81 family. As to quaternary structure, interacts with sorf-1; the interaction is direct. Interacts with bec-1.

It is found in the early endosome. Its subcellular location is the late endosome. It localises to the cytoplasm. In terms of biological role, together with sorf-1 negatively regulates the levels of phosphatidylinositol 3-phosphate (PtdIns3P) to enable the conversion of early endosomes to late endosomes. Binds to sorf-1 and the sorf-1-sorf-2 complex likely acts through bec-1, a non-catalytic subunit of phosphatidylinositol 3-kinase (PI3K), to suppress PI3K activity, thereby negatively regulating endosomal PtdIns3P levels. This Caenorhabditis elegans protein is Suppressor of organelle fusion 2.